The chain runs to 58 residues: MHQVGVGEHLLGQVLDGLGQPFDGGHLPEPAAWYPVYQDAPAPMSRKLITTPLSLGIL.

This is an uncharacterized protein from Yersinia enterocolitica.